Here is a 265-residue protein sequence, read N- to C-terminus: Translation initiation factor 2 subunit alpha (265 aa).

Residues 12–83 (GELIIGTVYK…KKGHVDASLK (72 aa)) form the S1 motif domain.

It belongs to the eIF-2-alpha family. In terms of assembly, heterotrimer composed of an alpha, a beta and a gamma chain.

Its function is as follows. eIF-2 functions in the early steps of protein synthesis by forming a ternary complex with GTP and initiator tRNA. This Methanobrevibacter smithii (strain ATCC 35061 / DSM 861 / OCM 144 / PS) protein is Translation initiation factor 2 subunit alpha.